Consider the following 566-residue polypeptide: 2-isopropylmalate synthase (566 aa).

A Pyruvate carboxyltransferase domain is found at proline 32–aspartate 306. 4 residues coordinate Mg(2+): aspartate 41, histidine 245, histidine 247, and asparagine 281. Residues proline 451–arginine 566 form a regulatory domain region.

This sequence belongs to the alpha-IPM synthase/homocitrate synthase family. LeuA type 2 subfamily. In terms of assembly, homodimer. The cofactor is Mg(2+).

Its subcellular location is the cytoplasm. The catalysed reaction is 3-methyl-2-oxobutanoate + acetyl-CoA + H2O = (2S)-2-isopropylmalate + CoA + H(+). It functions in the pathway amino-acid biosynthesis; L-leucine biosynthesis; L-leucine from 3-methyl-2-oxobutanoate: step 1/4. Functionally, catalyzes the condensation of the acetyl group of acetyl-CoA with 3-methyl-2-oxobutanoate (2-ketoisovalerate) to form 3-carboxy-3-hydroxy-4-methylpentanoate (2-isopropylmalate). The sequence is that of 2-isopropylmalate synthase from Mycobacterium ulcerans (strain Agy99).